Reading from the N-terminus, the 463-residue chain is Quinolone resistance protein NorB (463 aa).

The next 14 membrane-spanning stretches (helical) occupy residues 17 to 37 (IGIVLSVITFWLFAQSLVNVV), 53 to 73 (IAVSITALFSGMFVVGAGGLA), 86 to 106 (IILNILGSLLIIISNIPLLLI), 107 to 127 (IGRLIQGLSAACIMPATLSII), 142 to 162 (YWSIGSWGGSGVCSFFGGAVA), 165 to 185 (LGWRWIFILSIIISLIALFLI), 201 to 221 (FDIKGLVLLVIMLLSLNILIT), 230 to 250 (SLLFITILAIAIVSFSLFIVL), 273 to 293 (TASNFLLNGVAGTLIVANTFV), 299 to 319 (YSSLQAGSLSITYLVMVLIMI), 334 to 354 (PMLIGTAVLIVGECLISLTFL), 357 to 377 (ILYVICCIIGYLFFGLGLGIY), 403 to 423 (MASALGGAFGVALSGAVYAIV), and 435 to 455 (IALWLNAGMGILSFVIILLLV).

This sequence belongs to the major facilitator superfamily. TCR/Tet family.

The protein localises to the cell membrane. In terms of biological role, multidrug efflux pump that acts independently of NorA and is one of the factors that confers resistance against diverse quinolones and chemical compounds. This is Quinolone resistance protein NorB (norB) from Staphylococcus aureus (strain MRSA252).